A 594-amino-acid polypeptide reads, in one-letter code: U3 small nucleolar RNA-associated protein 18 (594 aa).

2 disordered regions span residues 48–128 (EQEM…WIDS) and 176–200 (KWVD…SNNV). Composition is skewed to acidic residues over residues 49–72 (QEMD…DEAQ), 102–128 (TMDV…WIDS), and 180–196 (DESD…EEEG). The tract at residues 101–190 (DTMDVDDEDD…ESDSELDDEE (90 aa)) is interaction with UTP21. Phosphoserine occurs at positions 182 and 184. 5 WD repeats span residues 246-285 (PSHS…NHLV), 290-334 (LVGS…LTHS), 463-504 (GTTT…TSST), 513-554 (QLTT…VFSN), and 560-593 (TPLG…KLNH).

The protein belongs to the WD repeat UTP18 family. In terms of assembly, interacts with snoRNA U3. Interacts with MPP10, UTP21 and UTP25. Component of the ribosomal small subunit (SSU) processome composed of at least 40 protein subunits and snoRNA U3.

It is found in the nucleus. The protein resides in the nucleolus. Functionally, involved in nucleolar processing of pre-18S ribosomal RNA and ribosome assembly. This chain is U3 small nucleolar RNA-associated protein 18 (UTP18), found in Saccharomyces cerevisiae (strain ATCC 204508 / S288c) (Baker's yeast).